Consider the following 493-residue polypeptide: Serine/threonine-protein kinase PBL34 (493 aa).

2 disordered regions span residues 1-42 and 84-117; these read MGLD…EEEE and SKSA…TPVI. The N-myristoyl glycine moiety is linked to residue Gly-2. Residues 12–37 are compositionally biased toward basic and acidic residues; it reads WKSEKPKETENKNHKKKNGDDNKSRN. Over residues 100 to 114 the composition is skewed to low complexity; it reads SSTTTTSNAESSSST. Residue Thr-131 is modified to Phosphothreonine. A Protein kinase domain is found at 142–428; that stretch reads FRPESLLGEG…VEALKPLPHL (287 aa). Residues 148–156 and Lys-180 contribute to the ATP site; that span reads LGEGGFGCV. Tyr-225 bears the Phosphotyrosine mark. Residue Asp-275 is the Proton acceptor of the active site. At Ser-279 the chain carries Phosphoserine. Position 306 is a phosphothreonine (Thr-306). Ser-309 carries the post-translational modification Phosphoserine. 2 positions are modified to phosphothreonine: Thr-310 and Thr-315. At Tyr-323 the chain carries Phosphotyrosine. Positions 447–493 are disordered; that stretch reads KNGSGRSQGFGSRNGQHQPVFRTLSSPHGSSPYRHQIPSPKPKGATT. Over residues 450–475 the composition is skewed to polar residues; it reads SGRSQGFGSRNGQHQPVFRTLSSPHG.

The protein belongs to the protein kinase superfamily. Ser/Thr protein kinase family. Interacts with the Xanthomonas campestris effector XopAC/AvrAC. Interacts with SD129. Post-translationally, phosphorylated by SD129 at Thr-306 and Thr-310 in response to the pathogen-associated molecular pattern (PAMP) 3-OH-C10:0, a medium-chain 3-hydroxy fatty acid.

It localises to the cell membrane. The catalysed reaction is L-seryl-[protein] + ATP = O-phospho-L-seryl-[protein] + ADP + H(+). The enzyme catalyses L-threonyl-[protein] + ATP = O-phospho-L-threonyl-[protein] + ADP + H(+). Its function is as follows. Involved in chitin-triggered immune signaling and is required for reactive oxygen species (ROS) production. Acts downstream of SD129 in defense signaling triggered by the pathogen-associated molecular pattern (PAMP) 3-OH-C10:0, a medium-chain 3-hydroxy fatty acid. The polypeptide is Serine/threonine-protein kinase PBL34 (Arabidopsis thaliana (Mouse-ear cress)).